Reading from the N-terminus, the 686-residue chain is Probable serine/threonine-protein kinase pdkA (686 aa).

Residues 1 to 31 (MENIVITNTSGGGGGGVPSSSTDPPNNTTTT) are disordered. Over residues 18–31 (PSSSTDPPNNTTTT) the composition is skewed to low complexity. In terms of domain architecture, Protein kinase spans 69 to 449 (FIIGKVLGEG…FDNLKAHPFF (381 aa)). ATP is bound by residues 79–81 (SYG) and Lys98. Residues 100-144 (LEKKQIIKENKIKYVQIEKEIFCKSNHPNIVKLFFTFRSEQCLYY) are PIF-pocket. ATP-binding positions include 147 to 149 (ELC) and Asp153. Residue Asp192 is the Proton acceptor of the active site. ATP-binding residues include Glu196 and Asp210. 2 disordered regions span residues 211–321 (FGTG…NTNT) and 481–584 (LFSP…NNIS). Over residues 222–257 (SSQQQQQQQQQQQQLPTNSSGNLSSLLNNVNNLSVS) the composition is skewed to low complexity. Polar residues predominate over residues 258 to 267 (TDLTQQQQNR). Low complexity-rich tracts occupy residues 268 to 279 (TSSVDSASTTDS), 288 to 321 (TTTT…NTNT), and 503 to 568 (NSCN…QRSG). Residues 593 to 682 (VIYQGLVWKR…DSIKSVILSS (90 aa)) enclose the PH domain.

It belongs to the protein kinase superfamily. AGC Ser/Thr protein kinase family. PDPK1 subfamily.

The enzyme catalyses L-seryl-[protein] + ATP = O-phospho-L-seryl-[protein] + ADP + H(+). It carries out the reaction L-threonyl-[protein] + ATP = O-phospho-L-threonyl-[protein] + ADP + H(+). This Dictyostelium discoideum (Social amoeba) protein is Probable serine/threonine-protein kinase pdkA (pdkA).